We begin with the raw amino-acid sequence, 463 residues long: DDB1- and CUL4-associated factor 12-like protein 1 (463 aa).

The disordered stretch occupies residues 1–35 (MAQQQTGSRKRKAPAVEADAESSPSQGLAAADGEG). WD repeat units lie at residues 87–137 (LTER…PLLR), 138–184 (DSEA…SLDP), 185–252 (LCLG…DVEA), 253–297 (IPRA…ALSR), 298–341 (LLSI…QQNI), and 342–376 (RPLC…LFYD).

It belongs to the WD repeat DCAF12 family.

This is DDB1- and CUL4-associated factor 12-like protein 1 (DCAF12L1) from Homo sapiens (Human).